We begin with the raw amino-acid sequence, 726 residues long: 1,4-alpha-glucan branching enzyme GlgB (726 aa).

D407 (nucleophile) is an active-site residue. The active-site Proton donor is E460.

The protein belongs to the glycosyl hydrolase 13 family. GlgB subfamily. In terms of assembly, monomer.

The catalysed reaction is Transfers a segment of a (1-&gt;4)-alpha-D-glucan chain to a primary hydroxy group in a similar glucan chain.. It participates in glycan biosynthesis; glycogen biosynthesis. In terms of biological role, catalyzes the formation of the alpha-1,6-glucosidic linkages in glycogen by scission of a 1,4-alpha-linked oligosaccharide from growing alpha-1,4-glucan chains and the subsequent attachment of the oligosaccharide to the alpha-1,6 position. The sequence is that of 1,4-alpha-glucan branching enzyme GlgB from Hydrogenovibrio crunogenus (strain DSM 25203 / XCL-2) (Thiomicrospira crunogena).